The primary structure comprises 179 residues: Replication restart protein DnaT (179 aa).

The tract at residues 154 to 179 (SNGGLPKRDVNTVSEPDSQIPPGFRG) is disordered.

This sequence belongs to the DnaT family. Homooligomerizes. Interacts with PriB. Component of the replication restart primosome. Primosome assembly occurs via a 'hand-off' mechanism. PriA binds to replication forks, subsequently PriB then DnaT bind; DnaT then displaces ssDNA to generate the helicase loading substrate.

Its function is as follows. Involved in the restart of stalled replication forks, which reloads the replicative helicase on sites other than the origin of replication. Can function in multiple replication restart pathways. Displaces ssDNA from a PriB-ssDNA complex. Probably forms a spiral filament on ssDNA. The chain is Replication restart protein DnaT from Escherichia coli O127:H6 (strain E2348/69 / EPEC).